A 251-amino-acid chain; its full sequence is Capsid protein (251 aa).

Positions 1 to 27 are disordered; that stretch reads MPKRDLPWRSMPGTSKTSRNANYSPRA. A Bipartite nuclear localization signal motif is present at residues 3–20; that stretch reads KRDLPWRSMPGTSKTSRN. Polar residues predominate over residues 12–23; it reads PGTSKTSRNANY. Residues 35 to 49 carry the Nuclear localization signal motif; sequence KASEWVHRPMYRKPR. A zinc finger spans residues 63–80; that stretch reads CEGPCKVQSYEQRHDISH. The short motif at 96–117 is the Nuclear export signal element; sequence ITHRVGKRFCVKSVYILGKIWM. A Bipartite nuclear localization signal motif is present at residues 195 to 242; sequence KRFWKVNNHVVYNHQEAGKYENHTENALLLYMACTHASNPVYATLKIR.

It belongs to the geminiviridae capsid protein family. As to quaternary structure, homomultimer. Binds to single-stranded and double-stranded viral DNA. Interacts (via nuclear localization signals) with host importin alpha-1a.

Its subcellular location is the virion. The protein localises to the host nucleus. In terms of biological role, encapsidates the viral DNA into characteristic twinned ('geminate') particles. Binds the genomic viral ssDNA and shuttles it into and out of the cell nucleus. The CP of bipartite geminiviruses is not required for cell-to-cell or systemic movement. This chain is Capsid protein, found in Abutilon (Upland cotton).